A 556-amino-acid chain; its full sequence is Formate--tetrahydrofolate ligase (556 aa).

65 to 72 (TPAGEGKS) contacts ATP.

This sequence belongs to the formate--tetrahydrofolate ligase family.

The enzyme catalyses (6S)-5,6,7,8-tetrahydrofolate + formate + ATP = (6R)-10-formyltetrahydrofolate + ADP + phosphate. It participates in one-carbon metabolism; tetrahydrofolate interconversion. The chain is Formate--tetrahydrofolate ligase from Streptococcus pneumoniae (strain ATCC 700669 / Spain 23F-1).